Here is a 395-residue protein sequence, read N- to C-terminus: Glutamate N-acetyltransferase (395 aa).

Residues T146, K169, T180, E263, N390, and T395 each contribute to the substrate site. T180 acts as the Nucleophile in catalysis.

It belongs to the ArgJ family. In terms of assembly, heterotetramer of two alpha and two beta chains.

It localises to the cytoplasm. It catalyses the reaction N(2)-acetyl-L-ornithine + L-glutamate = N-acetyl-L-glutamate + L-ornithine. It participates in amino-acid biosynthesis; L-arginine biosynthesis; L-ornithine and N-acetyl-L-glutamate from L-glutamate and N(2)-acetyl-L-ornithine (cyclic): step 1/1. In terms of biological role, catalyzes the transfer of the acetyl group from N(2)-acetylornithine to glutamate, forming N-acetylglutamate and L-ornithine. This is Glutamate N-acetyltransferase from Methanosarcina mazei (strain ATCC BAA-159 / DSM 3647 / Goe1 / Go1 / JCM 11833 / OCM 88) (Methanosarcina frisia).